A 55-amino-acid polypeptide reads, in one-letter code: MAVPKKRTSKSKKNARKANWKRKGYKAAQKSLSLAKSMLKGKTTSFVYSIYVDDE.

The interval 1–24 (MAVPKKRTSKSKKNARKANWKRKG) is disordered.

It belongs to the bacterial ribosomal protein bL32 family.

It is found in the plastid. The protein resides in the chloroplast. The polypeptide is Large ribosomal subunit protein bL32c (Phaeodactylum tricornutum (strain CCAP 1055/1)).